The following is a 335-amino-acid chain: Ubiquinone biosynthesis protein COQ4, mitochondrial (335 aa).

The transit peptide at 1–10 (MLRLSLLRST) directs the protein to the mitochondrion. The Zn(2+) site is built by His210, Asp211, His214, and Glu226.

This sequence belongs to the COQ4 family. As to quaternary structure, component of a multi-subunit COQ enzyme complex, composed of at least COQ3, COQ4, COQ5, COQ6, COQ7 and COQ9. Interacts with COQ3. The cofactor is Zn(2+).

Its subcellular location is the mitochondrion inner membrane. The enzyme catalyses 4-hydroxy-3-methoxy-5-(all-trans-hexaprenyl)benzoate + H(+) = 2-methoxy-6-(all-trans-hexaprenyl)phenol + CO2. It participates in cofactor biosynthesis; ubiquinone biosynthesis. In terms of biological role, lyase that catalyzes the C1-decarboxylation of 4-hydroxy-3-methoxy-5-(all-trans-hexaprenyl)benzoic acid into 2-methoxy-6-(all-trans-hexaprenyl)phenol during ubiquinone biosynthesis. This Saccharomyces cerevisiae (strain RM11-1a) (Baker's yeast) protein is Ubiquinone biosynthesis protein COQ4, mitochondrial.